The following is a 1726-amino-acid chain: Probable serine/threonine-protein kinase roco4 (1726 aa).

LRR repeat units follow at residues 256-277, 280-301, 303-324, and 326-347; these read KGKRLSLSRSNLSRFPMSITQM, HLVELDLSDNKITELPKDIQLL, SLRILILRGNLLEDIPLEICYL, and DLKILELQENPLNNFPLSVVQS. Residues 364 to 544 enclose the Roc domain; the sequence is KSETWNKVKL…KRLIHEAEKS (181 aa). Residues 377–384, 428–432, and 487–490 each bind GTP; these read GQEGVGKT, DFGGQ, and THSD. The 197-residue stretch at 591–787 folds into the COR domain; sequence AINSQKERYI…RTYWRNGVLL (197 aa). The span at 800–881 shows a compositional bias: low complexity; that stretch reads SKQQQLQQQQ…STLNSQQLIN (82 aa). The interval 800-890 is disordered; that stretch reads SKQQQLQQQQ…NPSVSPLSST (91 aa). A Protein kinase domain is found at 1026–1292; sequence IEYEKQIGKG…SYIVKELSEL (267 aa). ATP contacts are provided by residues 1032-1040 and K1055; that span reads IGKGGFGLV. Residue D1154 is the Proton acceptor of the active site. Residues 1319 to 1331 are compositionally biased toward polar residues; the sequence is ASTSSNADDGSQT. The segment at 1319–1385 is disordered; that stretch reads ASTSSNADDG…SSPSTSFINS (67 aa). The segment covering 1332-1348 has biased composition (low complexity); that stretch reads NNNNNNNNNNNNNNNNN. A compositionally biased stretch (polar residues) spans 1349–1364; that stretch reads SGSSIALSPSRSFEQQ. Residues 1365 to 1381 are compositionally biased toward low complexity; it reads TTTTTTTTTSPSSPSTS. WD repeat units lie at residues 1422–1461, 1463–1502, 1506–1546, 1589–1627, 1633–1670, and 1674–1714; these read SVHKKMEVLAGVEAGETVWTKSADSSLCFWSTKKGHLINE, KCPHTVATTMMIKVGKYIWEATNSNGIYIWDMGTMTIVQQ, PHKG…KKHS, KHSTGSITSILAMKDEVWSGGSDGRIYIWKVKNEFELQK, AHHEKITSLIHLEDNVLSGSTDKCISLFKISDPKKPFT, and HHKQ…EKKT.

Belongs to the protein kinase superfamily. TKL Ser/Thr protein kinase family. ROCO subfamily.

It carries out the reaction L-seryl-[protein] + ATP = O-phospho-L-seryl-[protein] + ADP + H(+). The enzyme catalyses L-threonyl-[protein] + ATP = O-phospho-L-threonyl-[protein] + ADP + H(+). In Dictyostelium discoideum (Social amoeba), this protein is Probable serine/threonine-protein kinase roco4 (roco4).